A 33-amino-acid polypeptide reads, in one-letter code: Brevinin-2HSb (33 aa).

Residues C27 and C33 are joined by a disulfide bond.

Expressed by the skin glands.

The protein resides in the secreted. Its function is as follows. Has antibacterial activity against the Gram-positive bacterium S.aureus ATCC 25923 and the Gram-negative bacterium E.coli ATCC 25726. The sequence is that of Brevinin-2HSb from Odorrana hosii (Hose's rock frog).